The primary structure comprises 124 residues: Small ribosomal subunit protein uS12 (124 aa).

The residue at position 89 (Asp-89) is a 3-methylthioaspartic acid.

The protein belongs to the universal ribosomal protein uS12 family. In terms of assembly, part of the 30S ribosomal subunit. Contacts proteins S8 and S17. May interact with IF1 in the 30S initiation complex.

With S4 and S5 plays an important role in translational accuracy. In terms of biological role, interacts with and stabilizes bases of the 16S rRNA that are involved in tRNA selection in the A site and with the mRNA backbone. Located at the interface of the 30S and 50S subunits, it traverses the body of the 30S subunit contacting proteins on the other side and probably holding the rRNA structure together. The combined cluster of proteins S8, S12 and S17 appears to hold together the shoulder and platform of the 30S subunit. In Acinetobacter baumannii (strain AB307-0294), this protein is Small ribosomal subunit protein uS12.